The following is a 287-amino-acid chain: Probable endonuclease 4 (287 aa).

Positions 69, 109, 144, 178, 181, 215, 228, 230, and 260 each coordinate Zn(2+).

Belongs to the AP endonuclease 2 family. Zn(2+) serves as cofactor.

The enzyme catalyses Endonucleolytic cleavage to 5'-phosphooligonucleotide end-products.. In terms of biological role, endonuclease IV plays a role in DNA repair. It cleaves phosphodiester bonds at apurinic or apyrimidinic (AP) sites, generating a 3'-hydroxyl group and a 5'-terminal sugar phosphate. In Thermotoga neapolitana (strain ATCC 49049 / DSM 4359 / NBRC 107923 / NS-E), this protein is Probable endonuclease 4.